A 1149-amino-acid chain; its full sequence is Protein deacetylase HDAC6 (1149 aa).

The tract at residues 1–61 (MTSTGQDSST…KGKMKKLSQP (61 aa)) is disordered. The span at 18–29 (NPQSPLQESSAT) shows a compositional bias: polar residues. Residue S21 is modified to Phosphoserine. An Omega-N-methylarginine modification is found at R32. S43 carries the post-translational modification Phosphoserine. Positions 66–75 (LVVGLQGLDL) match the Nuclear export signal motif. Histone deacetylase stretches follow at residues 87–403 (LVFD…TLLG) and 481–799 (GLVY…SLLG). H215 (1) is an active-site residue. Catalysis depends on H610, which acts as the 2. A disordered region spans residues 954–975 (ALGETEPTPPASHTNKQTTGAS). T958, T961, T967, and T971 each carry phosphothreonine. Positions 964-975 (ASHTNKQTTGAS) are enriched in polar residues. Residue S975 is modified to Phosphoserine. The UBP-type zinc finger occupies 1045 to 1143 (SWCPHLMAVC…NAAHQNKFGE (99 aa)). Positions 1047, 1049, 1067, 1070, 1079, 1082, and 1087 each coordinate Zn(2+). The tract at residues 1088–1090 (SRY) is ubiquitin binding. Residues H1094, H1098, H1104, C1117, and C1120 each contribute to the Zn(2+) site. Residues 1116–1123 (WCYVCQAY) are ubiquitin binding. Phosphoserine is present on S1148.

The protein belongs to the histone deacetylase family. HD type 2 subfamily. As to quaternary structure, forms a trimeric complex in the nucleus consisting of BANP, HDAC6 and KHDRBS1/SAM68; HDAC6 keeps KHDRBS1 in a deacetylated state which inhibits the inclusion of CD44 alternate exons. The complex is disrupted by MAPK1/MAPK3-mediated phosphorylation of BANP which results in BANP export to the cytoplasm. This facilitates acetylation of KHDRBS1 and CD44 variant exon inclusion. Interacts with SIRT2 (via both phosphorylated, unphosphorylated, active or inactive forms); the interaction is necessary for the complex to interact with alpha-tubulin. Under proteasome impairment conditions, interacts with UBD via its histone deacetylase 1 and UBP-type zinc-finger regions. Interacts with BBIP1, CBFA2T3, CYLD, DDIT3/CHOP, ZMYND15, F-actin and HDAC11. Interacts with RIPOR2; this interaction occurs during early myogenic differentiation and prevents HDAC6 to deacetylate tubulin. Interacts with AURKA; AURKA-mediated phosphorylation of HDAC6 promotes deacetylation of alpha-tubulin. Interacts with DYSF; this interaction occurs during early myogenic differentiation. Interacts with TPPP; inhibiting the tubulin deacetylase activity of HDAC6. Interacts with DYNLL1. Interacts with ATP13A2; the interaction results in recruitment of HDAC6 to lysosomes to promote CTTN deacetylation. Interacts with CCDC141 (via the N-terminal region); inhibiting the deacetylase activity of HDAC6. Interacts with IPO7; the interaction facilitates HDAC6 nuclear translocation in dental papilla cells. It depends on Zn(2+) as a cofactor. Phosphorylated by AURKA; phosphorylation increases HDAC6-mediated deacetylation of alpha-tubulin and subsequent disassembly of cilia. Post-translationally, ubiquitinated. Its polyubiquitination however does not lead to its degradation. In terms of processing, sumoylated in vitro. As to expression, expressed in neurons of the cortex. Expressed in Purkinje cells. Detected in keratinocytes (at protein level).

The protein localises to the cytoplasm. It localises to the cytoskeleton. It is found in the nucleus. The protein resides in the perikaryon. Its subcellular location is the cell projection. The protein localises to the dendrite. It localises to the axon. It is found in the cilium. The protein resides in the microtubule organizing center. Its subcellular location is the centrosome. The protein localises to the cilium basal body. It catalyses the reaction N(6)-acetyl-L-lysyl-[protein] + H2O = L-lysyl-[protein] + acetate. The enzyme catalyses N(6)-acetyl-L-lysyl-[alpha-tubulin] + H2O = L-lysyl-[alpha-tubulin] + acetate. It functions in the pathway protein modification; protein ubiquitination. Deacetylates a wide range of non-histone substrates. Plays a central role in microtubule-dependent cell motility by mediating deacetylation of tubulin. Required for cilia disassembly via deacetylation of alpha-tubulin. Alpha-tubulin deacetylation results in destabilization of dynamic microtubules. Promotes deacetylation of CTTN, leading to actin polymerization, promotion of autophagosome-lysosome fusion and completion of autophagy. Deacetylates SQSTM1. Deacetylates peroxiredoxins PRDX1 and PRDX2, decreasing their reducing activity. Deacetylates antiviral protein RIGI in the presence of viral mRNAs which is required for viral RNA detection by RIGI. Sequentially deacetylates and polyubiquitinates DNA mismatch repair protein MSH2 which leads to MSH2 degradation, reducing cellular sensitivity to DNA-damaging agents and decreasing cellular DNA mismatch repair activities. Deacetylates DNA mismatch repair protein MLH1 which prevents recruitment of the MutL alpha complex (formed by the MLH1-PMS2 heterodimer) to the MutS alpha complex (formed by the MSH2-MSH6 heterodimer), leading to tolerance of DNA damage. Deacetylates RHOT1/MIRO1 which blocks mitochondrial transport and mediates axon growth inhibition. Deacetylates transcription factor SP1 which leads to increased expression of ENG, positively regulating angiogenesis. Deacetylates KHDRBS1/SAM68 which regulates alternative splicing by inhibiting the inclusion of CD44 alternate exons. Promotes odontoblast differentiation following IPO7-mediated nuclear import and subsequent repression of RUNX2 expression. In addition to its protein deacetylase activity, plays a key role in the degradation of misfolded proteins: when misfolded proteins are too abundant to be degraded by the chaperone refolding system and the ubiquitin-proteasome, mediates the transport of misfolded proteins to a cytoplasmic juxtanuclear structure called aggresome. Probably acts as an adapter that recognizes polyubiquitinated misfolded proteins and target them to the aggresome, facilitating their clearance by autophagy. The chain is Protein deacetylase HDAC6 from Mus musculus (Mouse).